A 377-amino-acid chain; its full sequence is Nitric oxide reductase FlRd-NAD(+) reductase (377 aa).

Belongs to the FAD-dependent oxidoreductase family. FAD serves as cofactor.

The protein resides in the cytoplasm. The catalysed reaction is 2 reduced [nitric oxide reductase rubredoxin domain] + NAD(+) + H(+) = 2 oxidized [nitric oxide reductase rubredoxin domain] + NADH. It participates in nitrogen metabolism; nitric oxide reduction. Its function is as follows. One of at least two accessory proteins for anaerobic nitric oxide (NO) reductase. Reduces the rubredoxin moiety of NO reductase. The polypeptide is Nitric oxide reductase FlRd-NAD(+) reductase (Citrobacter koseri (strain ATCC BAA-895 / CDC 4225-83 / SGSC4696)).